A 124-amino-acid chain; its full sequence is uncharacterized protein (124 aa).

The next 3 membrane-spanning stretches (helical) occupy residues 13 to 33 (LIQI…VLQL), 43 to 63 (GLFW…PEFF), and 71 to 91 (GVGR…FYLI).

To M.thermoautotrophicum MTH137.

Its subcellular location is the cell membrane. This is an uncharacterized protein from Methanocaldococcus jannaschii (strain ATCC 43067 / DSM 2661 / JAL-1 / JCM 10045 / NBRC 100440) (Methanococcus jannaschii).